A 217-amino-acid chain; its full sequence is Cytidylate kinase (217 aa).

Residue 10 to 18 (GPAGAGKST) coordinates ATP.

This sequence belongs to the cytidylate kinase family. Type 1 subfamily.

The protein resides in the cytoplasm. It carries out the reaction CMP + ATP = CDP + ADP. The catalysed reaction is dCMP + ATP = dCDP + ADP. In Clostridium botulinum (strain Loch Maree / Type A3), this protein is Cytidylate kinase.